An 86-amino-acid chain; its full sequence is MDQVIVKASDMGDEMQQEVFRIAEEAMREHTLEREIASVIKKEMDSRYGHTWHVIVGRSFGSYVTHEKGKFVYFYVGPLALLVFKT.

The protein belongs to the dynein light chain family. As to quaternary structure, homodimer. Cytoplasmic dynein consists of two catalytic heavy chains (HCs) and a number of non-catalytic subunits which present intermediate chains (ICs), light intermediate chains (LICs) and light chains (LCs). Component of the nuclear pore complex (NPC). NPC constitutes the exclusive means of nucleocytoplasmic transport. NPCs allow the passive diffusion of ions and small molecules and the active, nuclear transport receptor-mediated bidirectional transport of macromolecules such as proteins, RNAs, ribonucleoparticles (RNPs), and ribosomal subunits across the nuclear envelope. Due to its 8-fold rotational symmetry, all subunits are present with 8 copies or multiples thereof.

It is found in the cytoplasm. Its subcellular location is the cytoskeleton. The protein localises to the nucleus. It localises to the nuclear pore complex. Functionally, acts as one of several non-catalytic accessory components of the cytoplasmic dynein complex that are thought to be involved in linking dynein to cargos and to adapter proteins that regulate dynein function. Cytoplasmic dynein 1 acts as a motor for the intracellular retrograde motility of vesicles and organelles along microtubules. May play a role in changing or maintaining the spatial distribution of cytoskeletal structures. Also a component of the nuclear pore complex. This is Dynein light chain 1, cytoplasmic (DYN2) from Candida glabrata (strain ATCC 2001 / BCRC 20586 / JCM 3761 / NBRC 0622 / NRRL Y-65 / CBS 138) (Yeast).